The sequence spans 47 residues: Large ribosomal subunit protein bL33A (47 aa).

It belongs to the bacterial ribosomal protein bL33 family.

This Staphylococcus aureus (strain JH1) protein is Large ribosomal subunit protein bL33A.